Here is a 258-residue protein sequence, read N- to C-terminus: RBPJ-interacting and tubulin-associated protein 1 (258 aa).

3 disordered regions span residues 28-86 (FGSP…PRKK), 132-182 (TPPA…APRS), and 195-258 (AVPS…PPWK). A compositionally biased stretch (polar residues) spans 71 to 81 (SPSSRGSTPNL). The short motif at 81-97 (LTPRKKNKYRLIGHTPS) is the Nuclear localization signal element. An interaction with RBPJ/RBPSUH region spans residues 117 to 145 (RTAVEDAAKLRTLFWTPPATPRGSHSPRP). The interaction with tubulin stretch occupies residues 145 to 258 (PRETPLRAIH…CPQKPKPPWK (114 aa)). Composition is skewed to polar residues over residues 201–212 (HPASTAPQTNGP) and 236–245 (GSVSGPTTPQ).

This sequence belongs to the RITA family. Interacts with RBPJ/RBPSUH.

The protein resides in the cytoplasm. It is found in the nucleus. Its subcellular location is the cytoskeleton. The protein localises to the microtubule organizing center. It localises to the centrosome. Its function is as follows. Tubulin-binding protein that acts as a negative regulator of Notch signaling pathway. Shuttles between the cytoplasm and the nucleus and mediates the nuclear export of RBPJ/RBPSUH, thereby preventing the interaction between RBPJ/RBPSUH and NICD product of Notch proteins (Notch intracellular domain), leading to down-regulate Notch-mediated transcription. May play a role in neurogenesis. This chain is RBPJ-interacting and tubulin-associated protein 1 (Rita1), found in Rattus norvegicus (Rat).